A 51-amino-acid polypeptide reads, in one-letter code: Large ribosomal subunit protein bL33 (51 aa).

This sequence belongs to the bacterial ribosomal protein bL33 family.

The chain is Large ribosomal subunit protein bL33 from Methylococcus capsulatus (strain ATCC 33009 / NCIMB 11132 / Bath).